Reading from the N-terminus, the 181-residue chain is MEARRHSALKDSVRSIPDYPKPGIIFRDITTLLSDPRSFRRAVDSLVHPYAGGRIDQVAGIEARGFILGGAVAHQLSSGFVPIRKKGKLPHKTVSTAYALEYGTDEIEIHVDAIKPGDRVILVDDLIATGGTATAAVNLLRQLGAEVVAACFVIDLPEIGGAQRLRDLGVTVRTLMEFEGH.

This sequence belongs to the purine/pyrimidine phosphoribosyltransferase family. In terms of assembly, homodimer.

It is found in the cytoplasm. The enzyme catalyses AMP + diphosphate = 5-phospho-alpha-D-ribose 1-diphosphate + adenine. It functions in the pathway purine metabolism; AMP biosynthesis via salvage pathway; AMP from adenine: step 1/1. In terms of biological role, catalyzes a salvage reaction resulting in the formation of AMP, that is energically less costly than de novo synthesis. The chain is Adenine phosphoribosyltransferase from Methylorubrum extorquens (strain CM4 / NCIMB 13688) (Methylobacterium extorquens).